The primary structure comprises 273 residues: Transmembrane protein 45A (273 aa).

The next 5 membrane-spanning stretches (helical) occupy residues 8-27 (ALPG…KNIL), 55-79 (VVVL…ALIL), 108-131 (IICF…AIFV), 153-171 (LLVF…EFLV), and 217-236 (MFLS…LIGV).

Belongs to the TMEM45 family.

The protein resides in the membrane. In Mus musculus (Mouse), this protein is Transmembrane protein 45A (Tmem45a).